Here is a 1939-residue protein sequence, read N- to C-terminus: Myosin-8 (1939 aa).

One can recognise a Myosin N-terminal SH3-like domain in the interval 35–84 (DAKTSVFVAEPKASYVKSTIQSKEGGKVTVKTEGGATLTVREDQVFPMNP). Thr-66 and Thr-71 each carry phosphothreonine. Residues 88 to 783 (DKIEDMAMMT…LLGLLEEMRD (696 aa)) form the Myosin motor domain. Lys-132 is modified (N6,N6,N6-trimethyllysine). 181-188 (GESGAGKT) is an ATP binding site. At Tyr-391 the chain carries Phosphotyrosine. The residue at position 421 (Thr-421) is a Phosphothreonine. At Tyr-426 the chain carries Phosphotyrosine. Position 627 is a phosphoserine (Ser-627). Positions 660–682 (LNKLMTNLRSTHPHFVRCIIPNE) are actin-binding. Pros-methylhistidine is present on His-758. The segment at 762–776 (KFGHTKVFFKAGLLG) is actin-binding. An IQ domain is found at 783–815 (DEKLSQIITRTQAVCRGFLMRVEYQKMLQRREA). Residues 844–1939 (LLKSAETEKE…REVHTKISAE (1096 aa)) adopt a coiled-coil conformation. Phosphoserine is present on residues Ser-1093, Ser-1097, Ser-1163, and Ser-1238. Thr-1242 carries the post-translational modification Phosphothreonine. Position 1244 is a phosphoserine (Ser-1244). Position 1256 is a phosphothreonine (Thr-1256). A Phosphoserine modification is found at Ser-1262. Phosphothreonine occurs at positions 1266 and 1287. Phosphoserine occurs at positions 1293, 1304, and 1307. Tyr-1465 is modified (phosphotyrosine). Thr-1468 is subject to Phosphothreonine. A Phosphoserine modification is found at Ser-1475. Tyr-1493 carries the post-translational modification Phosphotyrosine. Ser-1496 carries the phosphoserine modification. Thr-1502 carries the phosphothreonine modification. Ser-1515 bears the Phosphoserine mark. Residue Thr-1518 is modified to Phosphothreonine. A phosphoserine mark is found at Ser-1555, Ser-1575, Ser-1601, Ser-1604, Ser-1715, and Ser-1727. Thr-1731 is subject to Phosphothreonine. Position 1740 is a phosphoserine (Ser-1740).

Belongs to the TRAFAC class myosin-kinesin ATPase superfamily. Myosin family. As to quaternary structure, muscle myosin is a hexameric protein that consists of 2 heavy chain subunits (MHC), 2 alkali light chain subunits (MLC) and 2 regulatory light chain subunits (MLC-2).

It localises to the cytoplasm. Its subcellular location is the myofibril. Functionally, muscle contraction. The chain is Myosin-8 (MYH8) from Canis lupus familiaris (Dog).